Consider the following 928-residue polypeptide: Tyrosine-protein phosphatase 3 (928 aa).

Thr75 is modified (phosphothreonine). The region spanning Pro111–Asn232 is the Rhodanese domain. The disordered stretch occupies residues Lys247–Met307. Residue Ser248 is modified to Phosphoserine. 2 stretches are compositionally biased toward polar residues: residues Pro249–Asn259 and Thr265–Met275. The segment covering Lys280–His289 has biased composition (basic and acidic residues). The segment covering Ser290–Met307 has biased composition (low complexity). Phosphoserine is present on residues Ser297 and Ser368. Disordered stretches follow at residues Leu467–Gln487 and Met672–Asn713. Positions Tyr502 to Tyr878 constitute a Tyrosine-protein phosphatase domain. Residues Met672–Gly691 show a composition bias toward polar residues. Over residues Asn692 to Asn713 the composition is skewed to low complexity. Cys804 functions as the Phosphocysteine intermediate in the catalytic mechanism.

It belongs to the protein-tyrosine phosphatase family. Non-receptor class subfamily. In terms of assembly, interacts with HOG1.

Its subcellular location is the cytoplasm. The enzyme catalyses O-phospho-L-tyrosyl-[protein] + H2O = L-tyrosyl-[protein] + phosphate. Its function is as follows. Major phosphatase responsible for tyrosine dephosphorylation of MAP kinases FUS3 and HOG1 to inactivate their activity; it also has important roles, along with MSG5, in the inactivation of FUS3 following pheromone stimulation. This is Tyrosine-protein phosphatase 3 (PTP3) from Saccharomyces cerevisiae (strain ATCC 204508 / S288c) (Baker's yeast).